A 246-amino-acid polypeptide reads, in one-letter code: Small ribosomal subunit protein uS2 (246 aa).

Belongs to the universal ribosomal protein uS2 family. As to quaternary structure, component of the small ribosomal subunit. Mature ribosomes consist of a small (40S) and a large (60S) subunit. The 40S subunit contains about 33 different proteins and 1 molecule of RNA (18S). The 60S subunit contains about 49 different proteins and 3 molecules of RNA (25S, 5.8S and 5S). Interacts with ribosomal protein S21.

It is found in the cytoplasm. Functionally, required for the assembly and/or stability of the 40S ribosomal subunit. Required for the processing of the 20S rRNA-precursor to mature 18S rRNA in a late step of the maturation of 40S ribosomal subunits. The sequence is that of Small ribosomal subunit protein uS2 from Leishmania infantum.